A 345-amino-acid chain; its full sequence is Alanine racemase (345 aa).

The active-site Proton acceptor; specific for D-alanine is the Lys-33. At Lys-33 the chain carries N6-(pyridoxal phosphate)lysine. Arg-128 serves as a coordination point for substrate. The active-site Proton acceptor; specific for L-alanine is Tyr-242. Residue Met-291 participates in substrate binding.

This sequence belongs to the alanine racemase family. Pyridoxal 5'-phosphate serves as cofactor.

The catalysed reaction is L-alanine = D-alanine. Its pathway is amino-acid biosynthesis; D-alanine biosynthesis; D-alanine from L-alanine: step 1/1. In terms of biological role, catalyzes the interconversion of L-alanine and D-alanine. May also act on other amino acids. This is Alanine racemase (alr) from Ruegeria sp. (strain TM1040) (Silicibacter sp.).